Here is a 240-residue protein sequence, read N- to C-terminus: Putative tyrosine phosphatase 067L (240 aa).

The Tyrosine-protein phosphatase domain occupies 3 to 151; sequence QASFFVADKA…EREWPLNPTQ (149 aa). Catalysis depends on cysteine 96, which acts as the Phosphocysteine intermediate.

The protein belongs to the protein-tyrosine phosphatase family.

It catalyses the reaction O-phospho-L-tyrosyl-[protein] + H2O = L-tyrosyl-[protein] + phosphate. The protein is Putative tyrosine phosphatase 067L of Aedes vexans (Inland floodwater mosquito).